The sequence spans 176 residues: DNA-directed RNA polymerase II subunit 7 (176 aa).

The protein belongs to the eukaryotic RPB7/RPC8 RNA polymerase subunit family. Component of the RNA polymerase II complex consisting of at least 12 subunits. Interacts with NRPB4.

It localises to the nucleus. Functionally, DNA-dependent RNA polymerase catalyzes the transcription of DNA into RNA using the four ribonucleoside triphosphates as substrates. Component of RNA polymerase II which synthesizes mRNA precursors and many functional non-coding RNAs. Pol II is the central component of the basal RNA polymerase II transcription machinery. It is composed of mobile elements that move relative to each other. NRPB7 is part of a subcomplex with NRPB4 that binds to a pocket formed by NRPB1, NRPB2 and NRPB6 at the base of the clamp element. The NRBP4-NRPB7 subcomplex seems to lock the clamp via NRPB7 in the closed conformation thus preventing double-stranded DNA to enter the active site cleft. The NRPB4-NRPB7 subcomplex binds single-stranded DNA and RNA. This chain is DNA-directed RNA polymerase II subunit 7 (NRPB7), found in Arabidopsis thaliana (Mouse-ear cress).